The following is a 193-amino-acid chain: Orotate phosphoribosyltransferase (193 aa).

Glu-117 to Ser-125 lines the 5-phospho-alpha-D-ribose 1-diphosphate pocket. The orotate site is built by Thr-121 and Arg-149.

It belongs to the purine/pyrimidine phosphoribosyltransferase family. PyrE subfamily. Homodimer. Mg(2+) serves as cofactor.

It carries out the reaction orotidine 5'-phosphate + diphosphate = orotate + 5-phospho-alpha-D-ribose 1-diphosphate. It participates in pyrimidine metabolism; UMP biosynthesis via de novo pathway; UMP from orotate: step 1/2. In terms of biological role, catalyzes the transfer of a ribosyl phosphate group from 5-phosphoribose 1-diphosphate to orotate, leading to the formation of orotidine monophosphate (OMP). The protein is Orotate phosphoribosyltransferase of Erythrobacter litoralis (strain HTCC2594).